Here is a 107-residue protein sequence, read N- to C-terminus: Serine-rich and transmembrane domain-containing protein 1 (107 aa).

The helical transmembrane segment at 43 to 63 (IYVSIFLSLLAFLLLLLIIAL) threads the bilayer.

The protein resides in the membrane. The polypeptide is Serine-rich and transmembrane domain-containing protein 1 (Sertm1) (Mus musculus (Mouse)).